The chain runs to 340 residues: Phosphoribosylformylglycinamidine cyclo-ligase (340 aa).

It belongs to the AIR synthase family.

Its subcellular location is the cytoplasm. The catalysed reaction is 2-formamido-N(1)-(5-O-phospho-beta-D-ribosyl)acetamidine + ATP = 5-amino-1-(5-phospho-beta-D-ribosyl)imidazole + ADP + phosphate + H(+). The protein operates within purine metabolism; IMP biosynthesis via de novo pathway; 5-amino-1-(5-phospho-D-ribosyl)imidazole from N(2)-formyl-N(1)-(5-phospho-D-ribosyl)glycinamide: step 2/2. This is Phosphoribosylformylglycinamidine cyclo-ligase from Streptococcus pyogenes serotype M28 (strain MGAS6180).